The chain runs to 118 residues: Probable non-functional immunoglobulin lambda variable 2-33 (118 aa).

The first 19 residues, 1–19 (MAWALLLLTLLTQGTGSWA), serve as a signal peptide directing secretion. Residues 20 to 44 (QSALTQPPFVSGAPGQSVTISCTGT) are framework-1. An Ig-like domain is found at 34–118 (GQSVTISCTG…CSLYSSSYTF (85 aa)). A disulfide bridge connects residues Cys41 and Cys109. Positions 45-53 (SSDVGDYDH) are complementarity-determining-1. The interval 54–70 (VFWYQKRLSTTSRLLIY) is framework-2. Positions 71 to 73 (NVN) are complementarity-determining-2. Residues 74-109 (TRPSGISDLFSGSKSGNMASLTISGLKSEVEANYHC) form a framework-3 region. Residues 110–118 (SLYSSSYTF) form a complementarity-determining-3 region.

Immunoglobulins are composed of two identical heavy chains and two identical light chains; disulfide-linked.

The protein localises to the secreted. Its subcellular location is the cell membrane. In terms of biological role, probable non-functional open reading frame (ORF) of V region of the variable domain of immunoglobulin light chains. Non-functional ORF generally cannot participate in the synthesis of a productive immunoglobulin chain due to altered V-(D)-J or switch recombination and/or splicing site (at mRNA level) and/or conserved amino acid change (protein level). Immunoglobulins, also known as antibodies, are membrane-bound or secreted glycoproteins produced by B lymphocytes. In the recognition phase of humoral immunity, the membrane-bound immunoglobulins serve as receptors which, upon binding of a specific antigen, trigger the clonal expansion and differentiation of B lymphocytes into immunoglobulins-secreting plasma cells. Secreted immunoglobulins mediate the effector phase of humoral immunity, which results in the elimination of bound antigens. The antigen binding site is formed by the variable domain of one heavy chain, together with that of its associated light chain. Thus, each immunoglobulin has two antigen binding sites with remarkable affinity for a particular antigen. The variable domains are assembled by a process called V-(D)-J rearrangement and can then be subjected to somatic hypermutations which, after exposure to antigen and selection, allow affinity maturation for a particular antigen. The sequence is that of Probable non-functional immunoglobulin lambda variable 2-33 from Homo sapiens (Human).